A 1009-amino-acid chain; its full sequence is DNA ligase 3 (1009 aa).

A mitochondrion-targeting transit peptide spans 1 to 42 (MSLAFKIFFPQTLRALSRKELCLFRKHHWRDVRQFSQWSETD). A PARP-type zinc finger spans residues 93-185 (FCVDYAKRGT…QITQHIADLS (93 aa)). The Zn(2+) site is built by Cys-105, Cys-108, His-139, and Cys-142. 4 positions are modified to phosphoserine: Ser-210, Ser-216, Ser-227, and Ser-242. The disordered stretch occupies residues 224–256 (RKFSGFSAKPNNSGEAPSSPTPKRSLSSSKCDP). The segment covering 240–252 (PSSPTPKRSLSSS) has biased composition (low complexity). Interaction with DNA regions lie at residues 277-280 (PSYN), 318-323 (VYNLND), 388-391 (TKED), and 421-427 (KMNSGAK). Glu-506 is an ATP binding site. Lys-508 (N6-AMP-lysine intermediate) is an active-site residue. Arg-513 and Arg-528 together coordinate ATP. Glu-560 and Glu-655 together coordinate Mg(2+). Lys-660, Arg-671, and Lys-675 together coordinate ATP. Residues 842 to 917 (AGDEGSSTTG…LATKSSPVKV (76 aa)) are disordered. Composition is skewed to low complexity over residues 845–854 (EGSSTTGGSS) and 863–877 (SAVSRKAPSKPSAST). A compositionally biased stretch (polar residues) spans 884 to 898 (LSNSNSKDGNMQTAK). Residue Ser-913 is modified to Phosphoserine. The BRCT domain maps to 933–1009 (VLLDIFTGVR…IRKRRLVAPC (77 aa)).

This sequence belongs to the ATP-dependent DNA ligase family. As to quaternary structure, isoform 3 interacts (via BRCT domain) with the nuclear DNA-repair protein XRCC1. Interacts with POLG. Interacts with POLB. The cofactor is Mg(2+). As to expression, testis, thymus, prostate and heart.

The protein localises to the mitochondrion. It localises to the nucleus. The catalysed reaction is ATP + (deoxyribonucleotide)n-3'-hydroxyl + 5'-phospho-(deoxyribonucleotide)m = (deoxyribonucleotide)n+m + AMP + diphosphate.. Functionally, isoform 3 functions as a heterodimer with DNA-repair protein XRCC1 in the nucleus and can correct defective DNA strand-break repair and sister chromatid exchange following treatment with ionizing radiation and alkylating agents. Isoform 1 is targeted to mitochondria, where it functions as a DNA ligase in mitochondrial base-excision DNA repair. This chain is DNA ligase 3 (LIG3), found in Homo sapiens (Human).